The sequence spans 257 residues: UPF0246 protein Ping_3037 (257 aa).

Belongs to the UPF0246 family.

The protein is UPF0246 protein Ping_3037 of Psychromonas ingrahamii (strain DSM 17664 / CCUG 51855 / 37).